A 196-amino-acid chain; its full sequence is MADS-box protein FLOWERING LOCUS C (196 aa).

An MADS-box domain is found at 1–61; that stretch reads MGRKKLEIKR…GKLYSFSSGD (61 aa). The Nuclear localization signal motif lies at 8–15; the sequence is IKRIENKS. Residues 80–170 form the K-box domain; sequence ALDHQSKALN…ASQMENNHHV (91 aa).

In terms of tissue distribution, high expression in the vegetative apex and in root tissue and lower expression in leaves and stems. Not detected in young tissues of the inflorescence. Before fertilization, expressed in ovules, but not in pollen or stamens, of non-vernalized plants. After vernalization, not detected in ovules.

It is found in the nucleus. In terms of biological role, putative transcription factor that seems to play a central role in the regulation of flowering time in the late-flowering phenotype by interacting with 'FRIGIDA', the autonomous and the vernalization flowering pathways. Inhibits flowering by repressing 'SUPPRESSOR OF OVEREXPRESSION OF CONSTANS 1'. At elevated temperatures (e.g. 29 degrees Celsius), maintained at high levels in a JMJ30/JMJ32-dependent manner to prevent extreme precocious flowering. This is MADS-box protein FLOWERING LOCUS C from Arabidopsis thaliana (Mouse-ear cress).